The sequence spans 966 residues: Glycine dehydrogenase (decarboxylating) (966 aa).

Residue K713 is modified to N6-(pyridoxal phosphate)lysine.

This sequence belongs to the GcvP family. As to quaternary structure, the glycine cleavage system is composed of four proteins: P, T, L and H. Pyridoxal 5'-phosphate serves as cofactor.

It catalyses the reaction N(6)-[(R)-lipoyl]-L-lysyl-[glycine-cleavage complex H protein] + glycine + H(+) = N(6)-[(R)-S(8)-aminomethyldihydrolipoyl]-L-lysyl-[glycine-cleavage complex H protein] + CO2. Functionally, the glycine cleavage system catalyzes the degradation of glycine. The P protein binds the alpha-amino group of glycine through its pyridoxal phosphate cofactor; CO(2) is released and the remaining methylamine moiety is then transferred to the lipoamide cofactor of the H protein. The protein is Glycine dehydrogenase (decarboxylating) of Shewanella halifaxensis (strain HAW-EB4).